Here is a 260-residue protein sequence, read N- to C-terminus: Imidazole glycerol phosphate synthase subunit HisF (260 aa).

Residues Asp-11 and Asp-130 contribute to the active site.

It belongs to the HisA/HisF family. In terms of assembly, heterodimer of HisH and HisF.

The protein resides in the cytoplasm. It catalyses the reaction 5-[(5-phospho-1-deoxy-D-ribulos-1-ylimino)methylamino]-1-(5-phospho-beta-D-ribosyl)imidazole-4-carboxamide + L-glutamine = D-erythro-1-(imidazol-4-yl)glycerol 3-phosphate + 5-amino-1-(5-phospho-beta-D-ribosyl)imidazole-4-carboxamide + L-glutamate + H(+). The protein operates within amino-acid biosynthesis; L-histidine biosynthesis; L-histidine from 5-phospho-alpha-D-ribose 1-diphosphate: step 5/9. IGPS catalyzes the conversion of PRFAR and glutamine to IGP, AICAR and glutamate. The HisF subunit catalyzes the cyclization activity that produces IGP and AICAR from PRFAR using the ammonia provided by the HisH subunit. This chain is Imidazole glycerol phosphate synthase subunit HisF, found in Thermomicrobium roseum (strain ATCC 27502 / DSM 5159 / P-2).